A 238-amino-acid polypeptide reads, in one-letter code: tRNA (guanine-N(7)-)-methyltransferase (238 aa).

The S-adenosyl-L-methionine site is built by Glu70, Asp95, Asp122, and Asp145. Asp145 is a catalytic residue. Residues Lys149, Asp181, and 216-219 contribute to the substrate site; that span reads TKFE.

This sequence belongs to the class I-like SAM-binding methyltransferase superfamily. TrmB family.

The catalysed reaction is guanosine(46) in tRNA + S-adenosyl-L-methionine = N(7)-methylguanosine(46) in tRNA + S-adenosyl-L-homocysteine. It participates in tRNA modification; N(7)-methylguanine-tRNA biosynthesis. Functionally, catalyzes the formation of N(7)-methylguanine at position 46 (m7G46) in tRNA. This chain is tRNA (guanine-N(7)-)-methyltransferase, found in Neisseria gonorrhoeae (strain ATCC 700825 / FA 1090).